The chain runs to 998 residues: Bifunctional glutamine synthetase adenylyltransferase/adenylyl-removing enzyme (998 aa).

Residues 1-487 (MVVTKPATQR…LHAKLFYQPL (487 aa)) are adenylyl removase. The tract at residues 492 to 998 (GPAGLEIRHG…KAVVCKVFGS (507 aa)) is adenylyl transferase.

The protein belongs to the GlnE family. Requires Mg(2+) as cofactor.

The enzyme catalyses [glutamine synthetase]-O(4)-(5'-adenylyl)-L-tyrosine + phosphate = [glutamine synthetase]-L-tyrosine + ADP. It catalyses the reaction [glutamine synthetase]-L-tyrosine + ATP = [glutamine synthetase]-O(4)-(5'-adenylyl)-L-tyrosine + diphosphate. Its function is as follows. Involved in the regulation of glutamine synthetase GlnA, a key enzyme in the process to assimilate ammonia. When cellular nitrogen levels are high, the C-terminal adenylyl transferase (AT) inactivates GlnA by covalent transfer of an adenylyl group from ATP to specific tyrosine residue of GlnA, thus reducing its activity. Conversely, when nitrogen levels are low, the N-terminal adenylyl removase (AR) activates GlnA by removing the adenylyl group by phosphorolysis, increasing its activity. The regulatory region of GlnE binds the signal transduction protein PII (GlnB) which indicates the nitrogen status of the cell. The chain is Bifunctional glutamine synthetase adenylyltransferase/adenylyl-removing enzyme from Mycolicibacterium paratuberculosis (strain ATCC BAA-968 / K-10) (Mycobacterium paratuberculosis).